A 565-amino-acid chain; its full sequence is MELEYESKRPLYIPYAGPILLEFPLLNKGSAFTNDERSHFNLHGLLPEAVETIEEQAERAYRQYQDFKNDDDKHIYLRNIQDTNETLFYRLLEAHLSEMMPIIYTPTVGEACEHFSDIYRRARGLFISYPNREHIDDMLQNATKQNVKVIVVTDGERILGLGDQGIGGMGIPIGKLSLYTACGGISPAYTLPVVLDVGTNNPQRLNDPLYMGWRHPRISGDEYYAFVDEFIQAVKRRWPNVLLQFEDFAQNNATPLLNRYRDELCCFNDDIQGTAAVTLGSLIAASHAAGSQLRDQTVTFLGAGSAGCGIAEQIIAQMISEGLSEEQARARVFMVDRFGLLTDKLPNLLDFQSKLVQKSDALQSWNLTSDSISLQDVVRNAKPTVLIGVSGQPGLFTEELIREMHKHCARPIVMPLSNPTSRVEARPEDIINWTDGAALVATGSPFSPVSYKEKLYPIAQCNNSYIFPGIGLGVLASGAKRVTDGMLMAASRALAQCSPLAQNGEGALLPNIDDIQAVSKTIAMQVGKAAQLQGVAIVTSEEALAKAIEHNYWQPQYRTYKRTSF.

Catalysis depends on Tyr-104, which acts as the Proton donor. NAD(+) is bound at residue Arg-157. Catalysis depends on Lys-175, which acts as the Proton acceptor. Positions 246, 247, and 270 each coordinate a divalent metal cation. 2 residues coordinate NAD(+): Asp-270 and Asn-418.

This sequence belongs to the malic enzymes family. Homotetramer. Mg(2+) is required as a cofactor. It depends on Mn(2+) as a cofactor.

It carries out the reaction (S)-malate + NAD(+) = pyruvate + CO2 + NADH. The catalysed reaction is oxaloacetate + H(+) = pyruvate + CO2. The protein is NAD-dependent malic enzyme of Yersinia enterocolitica serotype O:8 / biotype 1B (strain NCTC 13174 / 8081).